Reading from the N-terminus, the 202-residue chain is Inner membrane-spanning protein YciB (202 aa).

5 helical membrane passes run Ile47 to Phe67, Met75 to Asn95, Trp101 to Leu121, Leu146 to Phe166, and Phe174 to Leu194.

Belongs to the YciB family.

The protein localises to the cell inner membrane. Functionally, plays a role in cell envelope biogenesis, maintenance of cell envelope integrity and membrane homeostasis. The polypeptide is Inner membrane-spanning protein YciB (Dechloromonas aromatica (strain RCB)).